The primary structure comprises 159 residues: Sperm acrosome-associated protein 5 (159 aa).

The N-terminal stretch at 1-21 (MKAWGTVVVTLATLMVVTVDA) is a signal peptide. Residues 22–150 (KIYERCELAA…SEWLKGCDMH (129 aa)) form the C-type lysozyme domain. 4 disulfide bridges follow: Cys27–Cys147, Cys51–Cys135, Cys85–Cys100, and Cys96–Cys114. Residue Glu56 is part of the active site.

The protein belongs to the glycosyl hydrolase 22 family.

The protein localises to the secreted. It catalyses the reaction Hydrolysis of (1-&gt;4)-beta-linkages between N-acetylmuramic acid and N-acetyl-D-glucosamine residues in a peptidoglycan and between N-acetyl-D-glucosamine residues in chitodextrins.. This chain is Sperm acrosome-associated protein 5 (SPACA5), found in Homo sapiens (Human).